The chain runs to 383 residues: S-adenosylmethionine synthase (383 aa).

His22 lines the ATP pocket. Asp24 serves as a coordination point for Mg(2+). Position 50 (Glu50) interacts with K(+). Residues Glu63 and Gln99 each coordinate L-methionine. The interval 99 to 109 is flexible loop; that stretch reads QSLEINQAVLK. ATP is bound by residues 160 to 162, Asp235, 241 to 242, Ser258, and Lys262; these read DMK and RK. L-methionine is bound at residue Asp235. Residue Lys266 participates in L-methionine binding.

Belongs to the AdoMet synthase family. As to quaternary structure, homotetramer; dimer of dimers. It depends on Mg(2+) as a cofactor. The cofactor is K(+).

It is found in the cytoplasm. The catalysed reaction is L-methionine + ATP + H2O = S-adenosyl-L-methionine + phosphate + diphosphate. It functions in the pathway amino-acid biosynthesis; S-adenosyl-L-methionine biosynthesis; S-adenosyl-L-methionine from L-methionine: step 1/1. In terms of biological role, catalyzes the formation of S-adenosylmethionine (AdoMet) from methionine and ATP. The overall synthetic reaction is composed of two sequential steps, AdoMet formation and the subsequent tripolyphosphate hydrolysis which occurs prior to release of AdoMet from the enzyme. In Mycoplasma genitalium (strain ATCC 33530 / DSM 19775 / NCTC 10195 / G37) (Mycoplasmoides genitalium), this protein is S-adenosylmethionine synthase.